The following is a 695-amino-acid chain: Parasporal crystal protein Cry18Ca (695 aa).

This sequence belongs to the delta endotoxin family.

In terms of biological role, binds to the brush border membrane vesicles of scarab larvae and damages the gut wall somehow to allow the vegetative cells of P.popilliae to enter the hemolymph. The sequence is that of Parasporal crystal protein Cry18Ca (cry18Ca) from Paenibacillus popilliae (Bacillus popilliae).